The following is a 573-amino-acid chain: Membrane protein insertase YidC (573 aa).

6 helical membrane-spanning segments follow: residues 6 to 26, 355 to 375, 379 to 399, 446 to 466, 488 to 508, and 524 to 544; these read VFLIFAWLMVAALLWMEWGKD, FSIMAIIGQGLFWVLSHLHSF, WGWAIIGLVVLLRLALYPLSA, GGCLPLLIQMPIFFALYWVLV, PYFILPVLNIAIMWATQKLTP, and PLVFGVMMAFMPAGLVLYWVV.

The protein belongs to the OXA1/ALB3/YidC family. Type 1 subfamily. Interacts with the Sec translocase complex via SecD. Specifically interacts with transmembrane segments of nascent integral membrane proteins during membrane integration.

It is found in the cell inner membrane. Required for the insertion and/or proper folding and/or complex formation of integral membrane proteins into the membrane. Involved in integration of membrane proteins that insert both dependently and independently of the Sec translocase complex, as well as at least some lipoproteins. Aids folding of multispanning membrane proteins. The polypeptide is Membrane protein insertase YidC (Xanthomonas campestris pv. campestris (strain ATCC 33913 / DSM 3586 / NCPPB 528 / LMG 568 / P 25)).